Reading from the N-terminus, the 461-residue chain is Proton extrusion protein PxcA (461 aa).

Helical transmembrane passes span 244–264 (FMLL…ALIV), 339–359 (LKNI…VFTG), 386–406 (IILF…EVLV), and 421–441 (FINM…KYWI).

Belongs to the CemA family.

The protein localises to the cell inner membrane. Functionally, required for H(+) efflux immediately after light irradiation to form a rapid H(+) concentration gradient across the thylakoid membranes. Together with PxcL, contributes to transient H(+) uptake following dark to light transition. The protein is Proton extrusion protein PxcA of Thermosynechococcus vestitus (strain NIES-2133 / IAM M-273 / BP-1).